A 364-amino-acid chain; its full sequence is Homeobox protein Nkx-6.1 (364 aa).

Positions 35–134 (LYPATYPPLP…SSSSSASATS (100 aa)) are disordered. Low complexity-rich tracts occupy residues 48-92 (PSSS…LSAA) and 109-134 (ASGAALPSASPSGSSSSSSSSASATS). Residues 101–268 (LSRPSMPVAS…KYLAGPERAR (168 aa)) form a repressor domain region. Arg189 carries the asymmetric dimethylarginine modification. Residues 236–295 (RKHTRPTFSGQQIFALEKTFEQTKYLAGPERARLAYSLGMTESQVKVWFQNRRTKWRKKH) constitute a DNA-binding region (homeobox). The tract at residues 294-364 (KHAAEMATAK…LHASEAEGSS (71 aa)) is disordered. Positions 304–317 (KKQDSETERLKGTS) are enriched in basic and acidic residues. Positions 306–364 (QDSETERLKGTSENEEEDDDYNKPLDPNSDDEKITQLLKKHKSSSGGLLLHASEAEGSS) are involved in DNA-binding.

As to expression, pancreatic beta cells.

The protein resides in the nucleus. In terms of biological role, together with NKX2-2 and IRX3 acts to restrict the generation of motor neurons to the appropriate region of the neural tube. Belongs to the class II proteins of neuronal progenitor factors, which are induced by SHH signals. Transcription factor which binds to specific A/T-rich DNA sequences in the promoter regions of a number of genes. Involved in transcriptional regulation in islet beta cells. Binds to the insulin promoter and is involved in regulation of the insulin gene. This is Homeobox protein Nkx-6.1 (NKX6-1) from Mesocricetus auratus (Golden hamster).